The primary structure comprises 394 residues: Probable fatty acid methyltransferase (394 aa).

S-adenosyl-L-methionine contacts are provided by residues 128–129 (YS), 163–171 (LLDVGCGWG), and 189–194 (TLSKEQ). C358 is a catalytic residue.

Belongs to the CFA/CMAS family.

This is Probable fatty acid methyltransferase from Pseudomonas putida (Arthrobacter siderocapsulatus).